The chain runs to 130 residues: Small ribosomal subunit protein uS9 (130 aa).

Belongs to the universal ribosomal protein uS9 family.

This is Small ribosomal subunit protein uS9 from Pseudomonas fluorescens (strain Pf0-1).